Consider the following 965-residue polypeptide: SKI family transcriptional corepressor 1 (965 aa).

6 disordered regions span residues 45-72 (TQLGPGREGSSSPNSKQELQPYSGSSAL), 278-367 (RTFS…GGGA), 410-458 (DDPV…GGGA), 530-592 (SGAP…GSYV), 615-777 (AYGA…FAPE), and 796-843 (VCTP…EDGL). Composition is skewed to gly residues over residues 283 to 312 (QGGGGGGANGGSGGQGKGGAGGGGGGGPGC), 356 to 367 (GPAGPGGPGGGA), and 418 to 442 (EPKGGPGTGSGGGGAGTGGGAGGPG). Positions 571–586 (LPPPLAPLPPPPPPPA) are enriched in pro residues. A compositionally biased stretch (gly residues) spans 620-632 (PARGPGPGAGSGG). Polar residues predominate over residues 641–650 (EGSSSYNSAS). Acidic residues-rich tracts occupy residues 654-663 (DTADEPEVDV) and 670-679 (DDEDAQEETE). The segment covering 800–823 (EAHEPDKEDNHSPADDLETRKSYP) has biased composition (basic and acidic residues). The span at 824–835 (DQRSISQPSPAN) shows a compositional bias: polar residues. Residues 858–922 (ENLAREELQK…DTLCNELDQE (65 aa)) adopt a coiled-coil conformation.

Belongs to the SKI family. As to quaternary structure, interacts with LBX1. Interacts with SMAD1, SMAD2 and SMAD3. As to expression, present specifically in cerebellar Purkinje cells (at protein level).

It localises to the nucleus. Functionally, acts as a transcriptional corepressor of LBX1. Inhibits BMP signaling. The protein is SKI family transcriptional corepressor 1 (SKOR1) of Homo sapiens (Human).